Here is a 79-residue protein sequence, read N- to C-terminus: ATP synthase subunit beta (79 aa).

This sequence belongs to the ATPase alpha/beta chains family. In terms of assembly, F-type ATPases have 2 components, CF(1) - the catalytic core - and CF(0) - the membrane proton channel. CF(1) has five subunits: alpha(3), beta(3), gamma(1), delta(1), epsilon(1). CF(0) has three main subunits: a(1), b(2) and c(9-12). The alpha and beta chains form an alternating ring which encloses part of the gamma chain. CF(1) is attached to CF(0) by a central stalk formed by the gamma and epsilon chains, while a peripheral stalk is formed by the delta and b chains.

The protein resides in the cell membrane. The enzyme catalyses ATP + H2O + 4 H(+)(in) = ADP + phosphate + 5 H(+)(out). In terms of biological role, produces ATP from ADP in the presence of a proton gradient across the membrane. The catalytic sites are hosted primarily by the beta subunits. The polypeptide is ATP synthase subunit beta (atpD) (Streptococcus downei (Streptococcus sobrinus)).